A 513-amino-acid chain; its full sequence is Bifunctional purine biosynthesis protein PurH (513 aa).

In terms of domain architecture, MGS-like spans 1–144 (MSKRALISVS…KNHERVGIVV (144 aa)).

Belongs to the PurH family.

It catalyses the reaction (6R)-10-formyltetrahydrofolate + 5-amino-1-(5-phospho-beta-D-ribosyl)imidazole-4-carboxamide = 5-formamido-1-(5-phospho-D-ribosyl)imidazole-4-carboxamide + (6S)-5,6,7,8-tetrahydrofolate. It carries out the reaction IMP + H2O = 5-formamido-1-(5-phospho-D-ribosyl)imidazole-4-carboxamide. It participates in purine metabolism; IMP biosynthesis via de novo pathway; 5-formamido-1-(5-phospho-D-ribosyl)imidazole-4-carboxamide from 5-amino-1-(5-phospho-D-ribosyl)imidazole-4-carboxamide (10-formyl THF route): step 1/1. Its pathway is purine metabolism; IMP biosynthesis via de novo pathway; IMP from 5-formamido-1-(5-phospho-D-ribosyl)imidazole-4-carboxamide: step 1/1. The polypeptide is Bifunctional purine biosynthesis protein PurH (Moorella thermoacetica (strain ATCC 39073 / JCM 9320)).